The chain runs to 88 residues: Small ribosomal subunit protein uS15 (88 aa).

It belongs to the universal ribosomal protein uS15 family. Part of the 30S ribosomal subunit. Forms a bridge to the 50S subunit in the 70S ribosome, contacting the 23S rRNA.

Functionally, one of the primary rRNA binding proteins, it binds directly to 16S rRNA where it helps nucleate assembly of the platform of the 30S subunit by binding and bridging several RNA helices of the 16S rRNA. In terms of biological role, forms an intersubunit bridge (bridge B4) with the 23S rRNA of the 50S subunit in the ribosome. In Psychrobacter cryohalolentis (strain ATCC BAA-1226 / DSM 17306 / VKM B-2378 / K5), this protein is Small ribosomal subunit protein uS15.